The sequence spans 695 residues: Probable serine/threonine-protein kinase DDB_G0279405 (695 aa).

Disordered regions lie at residues 119–138 (IVAQ…PQPQ) and 149–192 (QIPT…KRHK). Residues 124 to 138 (QPQPQPQPQPQPQPQ) are compositionally biased toward pro residues. Low complexity predominate over residues 149–160 (QIPTTPPQQISQ). Residues 161 to 173 (FNITGNKSPSSIG) are compositionally biased toward polar residues. The region spanning 201–462 (YVFVRKLGKG…IAEIKSHKWT (262 aa)) is the Protein kinase domain. ATP is bound by residues 207-215 (LGKGTFGKV) and K230. D329 acts as the Proton acceptor in catalysis. The tract at residues 491-580 (TDHTIKPSDN…NQNQNNNNNS (90 aa)) is disordered. Over residues 510-528 (LSSSSGGESSGIIGSSNES) the composition is skewed to low complexity. A compositionally biased stretch (polar residues) spans 529–541 (KSMYNNVNSKQKI). The span at 542 to 580 (QNQNQNQNQNQNQNQNQNQNQNHNQNQNQNQNQNNNNNS) shows a compositional bias: low complexity.

This sequence belongs to the protein kinase superfamily. Ser/Thr protein kinase family.

It catalyses the reaction L-seryl-[protein] + ATP = O-phospho-L-seryl-[protein] + ADP + H(+). The enzyme catalyses L-threonyl-[protein] + ATP = O-phospho-L-threonyl-[protein] + ADP + H(+). The protein is Probable serine/threonine-protein kinase DDB_G0279405 of Dictyostelium discoideum (Social amoeba).